A 124-amino-acid chain; its full sequence is Small ribosomal subunit protein uS12 (124 aa).

D89 is subject to 3-methylthioaspartic acid. The interval 104 to 124 (TQGVKNRGQARSRYGAKKEKK) is disordered. The span at 111–124 (GQARSRYGAKKEKK) shows a compositional bias: basic residues.

Belongs to the universal ribosomal protein uS12 family. As to quaternary structure, part of the 30S ribosomal subunit. Contacts proteins S8 and S17. May interact with IF1 in the 30S initiation complex.

Its function is as follows. With S4 and S5 plays an important role in translational accuracy. In terms of biological role, interacts with and stabilizes bases of the 16S rRNA that are involved in tRNA selection in the A site and with the mRNA backbone. Located at the interface of the 30S and 50S subunits, it traverses the body of the 30S subunit contacting proteins on the other side and probably holding the rRNA structure together. The combined cluster of proteins S8, S12 and S17 appears to hold together the shoulder and platform of the 30S subunit. This Micrococcus luteus (strain ATCC 4698 / DSM 20030 / JCM 1464 / CCM 169 / CCUG 5858 / IAM 1056 / NBRC 3333 / NCIMB 9278 / NCTC 2665 / VKM Ac-2230) (Micrococcus lysodeikticus) protein is Small ribosomal subunit protein uS12.